The chain runs to 261 residues: 1-(5-phosphoribosyl)-5-[(5-phosphoribosylamino)methylideneamino] imidazole-4-carboxamide isomerase (261 aa).

Asp15 serves as the catalytic Proton acceptor. The active-site Proton donor is the Asp136.

Belongs to the HisA/HisF family.

It localises to the cytoplasm. The enzyme catalyses 1-(5-phospho-beta-D-ribosyl)-5-[(5-phospho-beta-D-ribosylamino)methylideneamino]imidazole-4-carboxamide = 5-[(5-phospho-1-deoxy-D-ribulos-1-ylimino)methylamino]-1-(5-phospho-beta-D-ribosyl)imidazole-4-carboxamide. It participates in amino-acid biosynthesis; L-histidine biosynthesis; L-histidine from 5-phospho-alpha-D-ribose 1-diphosphate: step 4/9. The polypeptide is 1-(5-phosphoribosyl)-5-[(5-phosphoribosylamino)methylideneamino] imidazole-4-carboxamide isomerase (Synechococcus sp. (strain JA-3-3Ab) (Cyanobacteria bacterium Yellowstone A-Prime)).